The following is a 361-amino-acid chain: Cdc42 effector protein 1 (361 aa).

Residues 1-29 (MPGPQGAGGAPAMNLGKLSPVGWVSSSQG) are disordered. Phosphoserine occurs at positions 19 and 27. T34 carries the phosphothreonine modification. Residues 38 to 52 (ISPPLGDFRHTMHVG) form the CRIB domain. At S39 the chain carries Phosphoserine. Residue R53 is modified to Omega-N-methylarginine. Phosphoserine is present on residues S65, S73, S77, S101, S113, S121, S139, S180, S190, S192, and S195. Residues 161–186 (CTISRLPRPEKPRDRDRDSSFPAEPE) form a disordered region. Basic and acidic residues predominate over residues 167–186 (PRPEKPRDRDRDSSFPAEPE). Disordered regions lie at residues 218–300 (EGSA…SRHH) and 320–361 (SWGS…EVKV). 4 repeat units span residues 220–226 (SAAETPA), 229–235 (PAASPPA), 236–242 (SVANPPA), and 243–249 (PASSPSL). Positions 220–249 (SAAETPAPAPAASPPASVANPPAPASSPSL) are 4 X 7 AA tandem repeats of [PT]-[AT]-A-[ENT]-[PT]-[PTS]-[AG]. A phosphoserine mark is found at S270, S320, and S323. The segment covering 332–347 (QAGSRTPVPSTVQANT) has biased composition (polar residues). Residues 351–361 (ADAEEDDEVKV) are compositionally biased toward acidic residues.

Belongs to the BORG/CEP family. As to quaternary structure, interacts with RHOQ and CDC42, in a GTP-dependent manner.

The protein resides in the endomembrane system. It is found in the cytoplasm. It localises to the cytoskeleton. Its function is as follows. Probably involved in the organization of the actin cytoskeleton. Induced membrane extensions in fibroblasts. The chain is Cdc42 effector protein 1 from Bos taurus (Bovine).